The sequence spans 310 residues: MVSLKTEIAGFSFDNCLMNAAGIYCMTKEELLAIENSEAGSFVTKTGTLEAREGNPQPRYADTDWGSINSMGLPNKGIDYYLDFVTELQDQDNSKNHVLSLVGLSPEETHIILKKVENSSYNGLIELNLSCPNVPGKPQIAYDFEMTDLILSEIFSYYQKPLGIKLPPYFDIVHFDQAATIFNKYPLAFINCVNSIGNGLVIDDETVVIKPKNGFGGIGGDFIKPTALANVHAFYKRLNPSIKIIGTGGVKNGRDAFEHILCGASMVQIGTALQKEGPEIFQRVSRELKEIMADKGYQSLEDFRGQLNYL.

Substrate-binding positions include Lys-45, 69–73 (NSMGL), and Asn-128. 45–46 (KT) is a binding site for FMN. FMN is bound at residue Asn-128. The Nucleophile role is filled by Cys-131. FMN is bound by residues Lys-165 and Val-193. 194–195 (NS) is a binding site for substrate. FMN-binding positions include Gly-220, 248-249 (GG), and 270-271 (GT).

The protein belongs to the dihydroorotate dehydrogenase family. Type 1 subfamily. In terms of assembly, homodimer. FMN serves as cofactor.

Its subcellular location is the cytoplasm. It carries out the reaction (S)-dihydroorotate + fumarate = orotate + succinate. It functions in the pathway pyrimidine metabolism; UMP biosynthesis via de novo pathway. Functionally, catalyzes the conversion of dihydroorotate to orotate with fumarate as the electron acceptor. This Streptococcus agalactiae serotype Ia (strain ATCC 27591 / A909 / CDC SS700) protein is Putative dihydroorotate dehydrogenase A (fumarate) (pyrD).